The sequence spans 827 residues: MTRSPLRRLAFGALRRLLYLWVRSETINQSAFTLKLDRSKPVFYVLQQPSVSDLAVVDRECTKAGLPRPVLPVAVGEHIEPAAFFYLTPEPDWFGRQDKRGISPTLDRVVTALGQHAVDDAQIVPVSVFWGQSPDRETSAWKLLFADSWAVTGRLRRLVSILILGRKTRVQFSTPIHLRELVEQDKGQERTLRMVHRILRVHFRNQKAAVIGPDVSHRRNLVKGLVHDPLVRQAIAEEAEREKISLEKAEAQALRYGNEIASDYTYTVIRFLELVLSWFWNKIYDGIKVHNVEGVRDIAQGHEVIYVPCHRSHIDYLLLSYLLFRNGLTPPHIAAGINLNMPVIGGLLRRGGAFFMRRTFKGNPLYTAVFNEYLHTLFSKGFPVEYFVEGGRSRTGRMLRPKTGMLAITLRSFLRSHRLPIVFVPVYIGYERVLEGRTYLGELRGASKKKESIFDLFKVLGALKQRFGQVSVNFGEPIKLAEFLDQQQPGWRQQELGPQYRPAWLNDTTNRLGERVARHLNEAASINPVNLVALALLSTSKLALDDRALARVLDLYLALLRAVPYSPHTTLPDGDGAALIEHVKGMDLLAEQKDALGKILYLDEQNAVLMTYYRNNVLHIFALPALLASFFQSSARISREQILRFTKALYPYLQAELFIRWEIEQLDDVVDQWLAAFVEQGLLKVEGDVYVRPAPSSRQFVLLTLLSRSVAQTLQRFYMAIALLLNAGQNAISAEELEDLCTVMAQRLSILHGLNAPEFFDKSLFRHFIQSLLDQGVLRQDEAGKLSHHPLLSELAEGAAKRVLPAEIRLSIRQVALDRNEDEPAAP.

The short motif at 309–314 (CHRSHI) is the HXXXXD motif element.

This sequence belongs to the GPAT/DAPAT family.

It is found in the cell inner membrane. It carries out the reaction sn-glycerol 3-phosphate + an acyl-CoA = a 1-acyl-sn-glycero-3-phosphate + CoA. It participates in phospholipid metabolism; CDP-diacylglycerol biosynthesis; CDP-diacylglycerol from sn-glycerol 3-phosphate: step 1/3. In Ectopseudomonas mendocina (strain ymp) (Pseudomonas mendocina), this protein is Glycerol-3-phosphate acyltransferase.